Reading from the N-terminus, the 67-residue chain is Large ribosomal subunit protein uL29 (67 aa).

The protein belongs to the universal ribosomal protein uL29 family.

The polypeptide is Large ribosomal subunit protein uL29 (Methanosarcina acetivorans (strain ATCC 35395 / DSM 2834 / JCM 12185 / C2A)).